Consider the following 91-residue polypeptide: Progonadoliberin-1 (91 aa).

An N-terminal signal peptide occupies residues 1 to 23 (MEPIPKLLAGLLLLTLCVVGCSS). Pyrrolidone carboxylic acid is present on Gln-24. Position 33 is a glycine amide (Gly-33).

It belongs to the GnRH family. In terms of processing, the precursor is cleaved by ACE, which removes the Gly-Lys-Arg peptide at the C-terminus, leading to mature hormone. The mature form of Gonadoliberin-1 is also cleaved and degraded by ACE.

Its subcellular location is the secreted. Functionally, stimulates the secretion of gonadotropins; it stimulates the secretion of both luteinizing and follicle-stimulating hormones. The protein is Progonadoliberin-1 (GNRH1) of Sus scrofa (Pig).